The chain runs to 1400 residues: ABC transporter G family member 30 (1400 aa).

A glycan (N-linked (GlcNAc...) asparagine) is linked at asparagine 116. The region spanning leucine 141–glutamate 414 is the ABC transporter 1 domain. Residue glycine 174 to threonine 181 coordinates ATP. Asparagine 472 is a glycosylation site (N-linked (GlcNAc...) asparagine). The ABC transmembrane type-2 1 domain maps to glutamate 492–phenylalanine 704. 7 helical membrane passes run phenylalanine 510–phenylalanine 530, leucine 553–valine 573, phenylalanine 582–leucine 602, phenylalanine 628–isoleucine 648, isoleucine 652–phenylalanine 672, methionine 679–leucine 699, and threonine 738–leucine 758. Positions valine 808–glycine 1053 constitute an ABC transporter 2 domain. ATP is bound at residue glycine 845–threonine 852. Residues asparagine 899 and asparagine 1040 are each glycosylated (N-linked (GlcNAc...) asparagine). An ABC transmembrane type-2 2 domain is found at valine 1125 to tyrosine 1339. 7 helical membrane passes run histidine 1144–tryptophan 1164, isoleucine 1179–isoleucine 1199, valine 1228–proline 1248, leucine 1263–leucine 1283, methionine 1289–isoleucine 1309, tryptophan 1317–serine 1337, and valine 1372–methionine 1392.

The protein belongs to the ABC transporter superfamily. ABCG family. PDR (TC 3.A.1.205) subfamily. In terms of tissue distribution, confined to roots. In seeds, mainly expressed in the embryo and, to a lesser extent, in the endosperm.

Its subcellular location is the cell membrane. The catalysed reaction is abscisate(out) + ATP + H2O = abscisate(in) + ADP + phosphate + H(+). In terms of biological role, together with ABCG40, import into the embryo the abscisic acid (ABA) delivered from the endosperm via ABCG25 and ABCG31-mediated export to suppress radicle extension and subsequent embryonic growth. Involved in root secretion of phytochemicals (phenolics and sugars) which regulate soil microbiota, influencing both fungal and bacterial communities. May be a general defense protein. The protein is ABC transporter G family member 30 of Arabidopsis thaliana (Mouse-ear cress).